A 177-amino-acid chain; its full sequence is uncharacterized protein (177 aa).

The protein to B.subtilis YutG.

This is an uncharacterized protein from Bacillus subtilis (strain 168).